The chain runs to 436 residues: UPF0597 protein YhaM (436 aa).

Belongs to the UPF0597 family.

The polypeptide is UPF0597 protein YhaM (Salmonella paratyphi A (strain ATCC 9150 / SARB42)).